The following is a 196-amino-acid chain: Small heat shock protein C3 (196 aa).

Residues 88-196 (SAYSSSAIRT…EKDAKEIPIQ (109 aa)) enclose the sHSP domain.

It belongs to the small heat shock protein (HSP20) family.

The sequence is that of Small heat shock protein C3 (hspc3-1) from Rickettsia felis (strain ATCC VR-1525 / URRWXCal2) (Rickettsia azadi).